Reading from the N-terminus, the 398-residue chain is Enoate reductase 1 (398 aa).

FMN is bound by residues threonine 37 and histidine 191. Residues histidine 191 and asparagine 194 each coordinate substrate. The active-site Proton donor is the tyrosine 196. Residues arginine 243 and arginine 348 each coordinate FMN. Tyrosine 375 contributes to the substrate binding site.

The protein belongs to the NADH:flavin oxidoreductase/NADH oxidase family. As to quaternary structure, homodimer or heterodimer. FMN is required as a cofactor.

The enzyme catalyses butanoate + NAD(+) = (2E)-2-butenoate + NADH + H(+). Enoate reductase with broad substrate specificity for different alpha,beta-unsaturated carbonyl compounds. Prefers NADPH over NADH as cofactor. The sequence is that of Enoate reductase 1 (KYE1) from Kluyveromyces lactis (strain ATCC 8585 / CBS 2359 / DSM 70799 / NBRC 1267 / NRRL Y-1140 / WM37) (Yeast).